The sequence spans 547 residues: Cytochrome P450 monooxygenase cpsD (547 aa).

Residues 18-38 (LTGAALVVTLITSVIIVAADL) form a helical membrane-spanning segment. Residue cysteine 476 coordinates heme. Residues 528–547 (RRRDARRTHEALGSKLKPEE) are disordered. A compositionally biased stretch (basic and acidic residues) spans 534–547 (RTHEALGSKLKPEE).

The protein belongs to the cytochrome P450 family. The cofactor is heme.

It is found in the membrane. The enzyme catalyses campesine B + campesine C + reduced [NADPH--hemoprotein reductase] + O2 = campesine D + oxidized [NADPH--hemoprotein reductase] + 2 H2O + 2 H(+). It catalyses the reaction 2 campesine B + reduced [NADPH--hemoprotein reductase] + O2 = campesine F + oxidized [NADPH--hemoprotein reductase] + 2 H2O + H(+). The catalysed reaction is campesine C + campesine A + reduced [NADPH--hemoprotein reductase] + O2 = campesine E + oxidized [NADPH--hemoprotein reductase] + 2 H2O + 2 H(+). The protein operates within alkaloid biosynthesis. In terms of biological role, cytochrome P450 monooxygenase; part of the gene cluster that mediates the biosynthesis of campesine G, a dimeric indole piperazine alkaloid that shows good insecticidal activity Galleria mellonella. Within the pathway, cpsD acts as a dimerase that simultaneously catalyzes one C-C bond (C3-C3') and two C-N bonds (C2-N16' and C2'-N16) coupling reactions between campesines B and C to produce a heterodimer with unexpected 6/5/6/6/6/6/5/6 eight-ring scaffold called campesine D. CpsD is also able to catalyze oxidative heterocoupling od campesines A with B to produce campesine F and campesines A with C to produce campesine E. The non-canonical non-ribosomal peptide synthetase cpsA catalyzes the first steps of the pathway by producing L-tryptophanal and L-valinal from their respective amino-acids. These products condensate spontaneously to form trypyl-valyl pyrazine also known as didehydrocampesine A. The NmrA-like family domain-containing oxidoreductase cpsB is the next enzyme in cps pathway and reduces the unstable didehydrocampesine A to campesine A. The methyltransferase cpsF and the acetyltransferase cpsE both recognize N13 of piperazine ring to carry out methylation and acetylation of campesine A to produce campesine C and B, respectively. The cytochrome P450 monooxygenase cpsD then acts as a dimerase that catalyzes oxidative heterocoupling between campesine B and C to produce heterodimers with unexpected 6/5/6/6/6/6/5/6 eight-ring scaffold called campesine D. Finally,the cytochrome P450 monooxygenase cpsC is a regioselective dehydrogenase that catalyzes dehydrogenation reaction towards C2-N1 to produce campesine G. In Aspergillus campestris (strain IBT 28561), this protein is Cytochrome P450 monooxygenase cpsD.